The sequence spans 530 residues: 4-alpha-glucanotransferase (530 aa).

This sequence belongs to the disproportionating enzyme family.

The protein resides in the cytoplasm. The enzyme catalyses Transfers a segment of a (1-&gt;4)-alpha-D-glucan to a new position in an acceptor, which may be glucose or a (1-&gt;4)-alpha-D-glucan.. This is 4-alpha-glucanotransferase (malQ) from Chlamydia caviae (strain ATCC VR-813 / DSM 19441 / 03DC25 / GPIC) (Chlamydophila caviae).